The chain runs to 132 residues: Glycine cleavage system H protein (132 aa).

The Lipoyl-binding domain occupies 24 to 106; it reads IATIGLSAFA…YGDGWLIKVR (83 aa). The residue at position 65 (lysine 65) is an N6-lipoyllysine.

The protein belongs to the GcvH family. The glycine cleavage system is composed of four proteins: P, T, L and H. (R)-lipoate is required as a cofactor.

In terms of biological role, the glycine cleavage system catalyzes the degradation of glycine. The H protein shuttles the methylamine group of glycine from the P protein to the T protein. The protein is Glycine cleavage system H protein of Rippkaea orientalis (strain PCC 8801 / RF-1) (Cyanothece sp. (strain PCC 8801)).